The primary structure comprises 361 residues: Queuine tRNA-ribosyltransferase (361 aa).

D92 functions as the Proton acceptor in the catalytic mechanism. Residues 92-96 (DSGGF), D146, Q189, and G216 contribute to the substrate site. The interval 247-253 (GVGKPAD) is RNA binding. The Nucleophile role is filled by D266. The interval 271–275 (TRSGR) is RNA binding; important for wobble base 34 recognition. Zn(2+)-binding residues include C304, C306, C309, and H335.

Belongs to the queuine tRNA-ribosyltransferase family. As to quaternary structure, homodimer. Within each dimer, one monomer is responsible for RNA recognition and catalysis, while the other monomer binds to the replacement base PreQ1. It depends on Zn(2+) as a cofactor.

The enzyme catalyses 7-aminomethyl-7-carbaguanine + guanosine(34) in tRNA = 7-aminomethyl-7-carbaguanosine(34) in tRNA + guanine. It participates in tRNA modification; tRNA-queuosine biosynthesis. Its function is as follows. Catalyzes the base-exchange of a guanine (G) residue with the queuine precursor 7-aminomethyl-7-deazaguanine (PreQ1) at position 34 (anticodon wobble position) in tRNAs with GU(N) anticodons (tRNA-Asp, -Asn, -His and -Tyr). Catalysis occurs through a double-displacement mechanism. The nucleophile active site attacks the C1' of nucleotide 34 to detach the guanine base from the RNA, forming a covalent enzyme-RNA intermediate. The proton acceptor active site deprotonates the incoming PreQ1, allowing a nucleophilic attack on the C1' of the ribose to form the product. After dissociation, two additional enzymatic reactions on the tRNA convert PreQ1 to queuine (Q), resulting in the hypermodified nucleoside queuosine (7-(((4,5-cis-dihydroxy-2-cyclopenten-1-yl)amino)methyl)-7-deazaguanosine). The polypeptide is Queuine tRNA-ribosyltransferase (Rickettsia rickettsii (strain Iowa)).